We begin with the raw amino-acid sequence, 157 residues long: Major allergen Alt a 1 (157 aa).

The signal sequence occupies residues 1–18 (MQFTTIASLFAAAGLAAA). An AA1-like domain is found at 35 to 153 (EGDYVWKISE…ADAYITLVTL (119 aa)). Intrachain disulfides connect cysteine 74-cysteine 89 and cysteine 128-cysteine 140.

The protein belongs to the ALTA1 family. Homodimer; disulfide-linked.

The protein localises to the spore wall. It localises to the secreted. Its function is as follows. May bind and inhibit the beta-glucanase activity of host plant thaumatin-like proteins. This is Major allergen Alt a 1 (ALTA1) from Alternaria alternata (Alternaria rot fungus).